The primary structure comprises 268 residues: Diaminopimelate epimerase (268 aa).

Residues N13, Q46, and N64 each contribute to the substrate site. The Proton donor role is filled by C73. Residues 74–75 (GN), N148, N181, and 199–200 (ER) contribute to the substrate site. Catalysis depends on C208, which acts as the Proton acceptor. 209–210 (GT) is a binding site for substrate.

Belongs to the diaminopimelate epimerase family. In terms of assembly, homodimer.

It localises to the cytoplasm. It catalyses the reaction (2S,6S)-2,6-diaminopimelate = meso-2,6-diaminopimelate. It participates in amino-acid biosynthesis; L-lysine biosynthesis via DAP pathway; DL-2,6-diaminopimelate from LL-2,6-diaminopimelate: step 1/1. Functionally, catalyzes the stereoinversion of LL-2,6-diaminopimelate (L,L-DAP) to meso-diaminopimelate (meso-DAP), a precursor of L-lysine and an essential component of the bacterial peptidoglycan. This chain is Diaminopimelate epimerase, found in Sphingopyxis alaskensis (strain DSM 13593 / LMG 18877 / RB2256) (Sphingomonas alaskensis).